We begin with the raw amino-acid sequence, 198 residues long: Nucleoside triphosphate pyrophosphatase (198 aa).

Asp-75 acts as the Proton acceptor in catalysis.

The protein belongs to the Maf family. It depends on a divalent metal cation as a cofactor.

The protein localises to the cytoplasm. It catalyses the reaction a ribonucleoside 5'-triphosphate + H2O = a ribonucleoside 5'-phosphate + diphosphate + H(+). It carries out the reaction a 2'-deoxyribonucleoside 5'-triphosphate + H2O = a 2'-deoxyribonucleoside 5'-phosphate + diphosphate + H(+). Nucleoside triphosphate pyrophosphatase. May have a dual role in cell division arrest and in preventing the incorporation of modified nucleotides into cellular nucleic acids. The protein is Nucleoside triphosphate pyrophosphatase of Hyphomonas neptunium (strain ATCC 15444).